A 69-amino-acid chain; its full sequence is Atypical cationic antimicrobial peptide (69 aa).

The N-terminal stretch at 1–22 is a signal peptide; sequence MAFLKKSLFLVLFLGLVSLSIC. Positions 23 to 45 are excised as a propeptide; that stretch reads DEEKRENEDEENQEDDEQSEMRR. Residues 25–45 form a disordered region; that stretch reads EKRENEDEENQEDDEQSEMRR. A compositionally biased stretch (acidic residues) spans 30–40; it reads EDEENQEDDEQ.

Belongs to the frog skin active peptide (FSAP) family. As to quaternary structure, monomer and/or weakly self-associated, oligomer, and amyloid-like fibril. Can adopt a monomeric nonamphipathic alpha-helical conformation, possibly with the aid of its cationic N- and C-termini, when bound to anionic membranes. Forms stable and ordered beta-sheet aggregates in aqueous environment or when bound to anionic or zwitterionic phospholipid vesicles. As to expression, expressed by the skin glands.

The protein localises to the secreted. It localises to the target cell membrane. In terms of biological role, atypical cationic antimicrobial peptide with potent activity against Gram-negative and Gram-positive bacteria. Acts by inducing permeabilization of bacterial membrane. In vitro, also shows chemoattractant activity, which is mediated through a G protein-coupled receptor (probably FPR2 coupled to the ERK1/2 MAPK kinase pathway). Has slow-kinetic self-association and amyloid-like properties that modulate its activity. The soluble, weakly self-associated forms act on leukocytes to promote chemotaxis but have low antibacterial activity, the oligomers exhibit potent antimicrobial activity, whereas the amyloid-like fibrils have a very weak antibacterial activity. The membrane composition has a great influence on the peptide behavior. The peptide induces membrane leakage and insertion to a lesser extent in model membranes of the anionic lipid phosphatidylglycerol (PG) than in the model membranes of the zwitterionic lipid phosphatidylcholine (PC) vesicles. It forms more fibrils in PC than in PG. Membrane perturbations are more observed in the presence of PG than in the presence of PC. The peptide shows low hemolytic activity. The polypeptide is Atypical cationic antimicrobial peptide (Phyllomedusa sauvagei (Sauvage's leaf frog)).